Reading from the N-terminus, the 261-residue chain is MEEEEEDYMSDAFINSLQDVRPGMSMPRRVKECYEKEEKHKEANIKNRQQKLKDVEKEKRDTKLNEALGNENKGFALLQKMGYKKGQALGKKGDGIVEPIPLNIKTGRSGIGHEEMKKRKAEENLESYRRKIQMRKHDEEQAADDFRMRMKSKREEIRLKADLSKSQRACMLLDGQKSISTPREAWYWPKMNEQEADEEADEETEEDEDLVEEELSTLEKLQILTSYLRGRHLFCIWCGTTYQDDEDMESNCPGDTAEDHN.

Disordered regions lie at residues 1-67 (MEEE…LNEA), 88-124 (ALGK…AEEN), and 184-213 (EAWY…LVEE). 2 stretches are compositionally biased toward basic and acidic residues: residues 29-64 (RVKE…DTKL) and 111-124 (IGHE…AEEN). Residues 31–65 (KECYEKEEKHKEANIKNRQQKLKDVEKEKRDTKLN) are a coiled coil. The G-patch domain maps to 70-116 (NENKGFALLQKMGYKKGQALGKKGDGIVEPIPLNIKTGRSGIGHEEM). The stretch at 190–222 (KMNEQEADEEADEETEEDEDLVEEELSTLEKLQ) forms a coiled coil. Acidic residues predominate over residues 194–213 (QEADEEADEETEEDEDLVEE).

This sequence belongs to the GPATCH11 family.

It is found in the chromosome. The protein localises to the centromere. The protein resides in the kinetochore. The chain is G patch domain-containing protein 11 (gpatch11) from Xenopus tropicalis (Western clawed frog).